The following is a 551-amino-acid chain: TRAF3-interacting JNK-activating modulator (551 aa).

Residues 1-526 (MISPDPRPSP…QLPPRRQCGR (526 aa)) are Cytoplasmic-facing. Disordered regions lie at residues 73–95 (LEEKGKAQHPQAREQGPSRRPGQ) and 140–178 (DHLSSQAGGLPPQDTPIKKPPKHHRGTQTKAEGPTIKND). Coiled-coil stretches lie at residues 240–436 (DKLK…LLTK) and 464–506 (WDLR…RKLQ). The helical; Anchor for type IV membrane protein transmembrane segment at 527-544 (WLPVLMVVIAAALAVFLA) threads the bilayer. Residues 545–551 (NKDNLMI) lie on the Extracellular side of the membrane.

In terms of assembly, interacts (via its coiled-coil domain) with TRAF3 (via isoleucine zipper). Interacts with MAP2K1. Interacts with PPP2CA; this interaction targets PPP2CA to the lysosomes. Interacts with TLR4. Interacts with MAVS. Interacts with TBK1.

The protein resides in the cell membrane. It localises to the golgi apparatus membrane. It is found in the lysosome membrane. Its subcellular location is the mitochondrion outer membrane. Adapter protein that plays essential roles in both innate and adaptive immunity. Plays a crucial role in the regulation of thymocyte development. Mechanistically, mediates TCR-stimulated activation through recruiting MAP2K1/MEK1 to the Golgi and, thereby, facilitating the interaction of MAP2K1/MEK1 with its activator BRAF. Also plays an essential role in regulatory T-cell stability and function by recruiting the serine-threonine phosphatase catalytic subunit (PPP2CA) to the lysosome, thereby facilitating the interaction of PP2Ac with the mTORC1 component RPTOR and restricting glycolytic metabolism. Positively regulates TLR4 signaling activity in macrophage-mediated inflammation by acting as a molecular clamp to facilitate LPS-induced translocation of TLR4 to lipid rafts. In response to viral infection, facilitates the recruitment of TRAF3 to MAVS within mitochondria leading to IRF3 activation and interferon production. However, participates in the maintenance of immune homeostasis and the prevention of overzealous innate immunity by promoting 'Lys-48'-dependent ubiquitination of TBK1. This chain is TRAF3-interacting JNK-activating modulator (TRAF3IP3), found in Homo sapiens (Human).